We begin with the raw amino-acid sequence, 234 residues long: MRTHGLTLLSLLLLAVPMLLVEAKKEGRNRRGSKASADESLALGKPGKEPRSQPTNYPIKGKFVTPDHADCRWAVTKQEEGIVLKVECTQRDNTFSCFFTGNPTSCLELHKNNAYWKQIGRNLRSQKVICGDAKSVLKTRVCRKKFPESNLKLVNSTLIRIKKPSQELMEPSPMDTVEVTTSSSPEKTQTMATKDPQCEEEDLKNQRKAALEYCGETWGSLCNFFLSMVQGSSC.

The signal sequence occupies residues 1-23; sequence MRTHGLTLLSLLLLAVPMLLVEA. A disordered region spans residues 25–59; the sequence is KEGRNRRGSKASADESLALGKPGKEPRSQPTNYPI. 3 disulfide bridges follow: Cys71–Cys88, Cys97–Cys130, and Cys106–Cys142. The N-linked (GlcNAc...) asparagine glycan is linked to Asn155. The segment at 169–200 is disordered; the sequence is MEPSPMDTVEVTTSSSPEKTQTMATKDPQCEE. A glycan (O-linked (GalNAc...) serine) is linked at Ser172. Residues 178 to 192 show a composition bias toward polar residues; it reads EVTTSSSPEKTQTMA. Residues 194–234 form a sufficient for interaction with FGF2 and FGF2-induced effects region; it reads KDPQCEEEDLKNQRKAALEYCGETWGSLCNFFLSMVQGSSC. Cystine bridges form between Cys198-Cys234 and Cys214-Cys222.

It belongs to the fibroblast growth factor-binding protein family. As to quaternary structure, found in a complex with FGFBP1, FGF1 and FGF2. Interacts with FGF1, FGF7, FGF10, FGF22 and HSPG2. Interacts with FGF2.

It is found in the secreted. Its subcellular location is the extracellular space. It localises to the cell membrane. Its function is as follows. Acts as a carrier protein that release fibroblast-binding factors (FGFs) from the extracellular matrix (EM) storage and thus enhance the mitogenic activity of FGFs. Enhances FGF2 signaling during tissue repair, angiogenesis and in tumor growth. The sequence is that of Fibroblast growth factor-binding protein 1 (FGFBP1) from Bos taurus (Bovine).